We begin with the raw amino-acid sequence, 266 residues long: Tryptophan synthase alpha chain (266 aa).

Catalysis depends on proton acceptor residues Glu45 and Asp56.

Belongs to the TrpA family. In terms of assembly, tetramer of two alpha and two beta chains.

The catalysed reaction is (1S,2R)-1-C-(indol-3-yl)glycerol 3-phosphate + L-serine = D-glyceraldehyde 3-phosphate + L-tryptophan + H2O. It functions in the pathway amino-acid biosynthesis; L-tryptophan biosynthesis; L-tryptophan from chorismate: step 5/5. Its function is as follows. The alpha subunit is responsible for the aldol cleavage of indoleglycerol phosphate to indole and glyceraldehyde 3-phosphate. This Novosphingobium aromaticivorans (strain ATCC 700278 / DSM 12444 / CCUG 56034 / CIP 105152 / NBRC 16084 / F199) protein is Tryptophan synthase alpha chain.